We begin with the raw amino-acid sequence, 450 residues long: MEGSKTSNNSTMQVSFVCQRCSQPLKLDTSFKILDRVTIQELTAPLLTTAQAKPGETQEEETNSGEEPFIETPRQDGVSRRFIPPARMMSTESANSFTLIGEASDGGTMENLSRRLKVTGDLFDIMSGQTDVDHPLCEECTDTLLDQLDTQLNVTENECQNYKRCLEILEQMNEDDSEQLQMELKELALEEERLIQELEDVEKNRKIVAENLEKVQAEAERLDQEEAQYQREYSEFKRQQLELDDELKSVENQMRYAQTQLDKLKKTNVFNATFHIWHSGQFGTINNFRLGRLPSVPVEWNEINAAWGQTVLLLHALANKMGLKFQRYRLVPYGNHSYLESLTDKSKELPLYCSGGLRFFWDNKFDHAMVAFLDCVQQFKEEVEKGETRFCLPYRMDVEKGKIEDTGGSGGSYSIKTQFNSEEQWTKALKFMLTNLKWGLAWVSSQFYNK.

Met1 carries the post-translational modification N-acetylmethionine. 2 positions are modified to phosphoserine: Ser15 and Ser30. The disordered stretch occupies residues 48 to 72 (TTAQAKPGETQEEETNSGEEPFIET). Phosphoserine; by AMPK occurs at positions 90, 93, and 96. The BH3 signature appears at 108–127 (TMENLSRRLKVTGDLFDIMS). Positions 112 to 159 (LSRRLKVTGDLFDIMSGQTDVDHPLCEECTDTLLDQLDTQLNVTENEC) are interaction with BCL2 and BCL2L1 isoform Bcl-X(L). At Thr119 the chain carries Phosphothreonine; by DAPK1. The stretch at 142–270 (DTLLDQLDTQ…LDKLKKTNVF (129 aa)) forms a coiled coil. Positions 245 to 450 (DELKSVENQM…AWVSSQFYNK (206 aa)) are evolutionary conserved domain (ECD). Residues Lys402 and Lys437 each participate in a glycyl lysine isopeptide (Lys-Gly) (interchain with G-Cter in ubiquitin) cross-link. The segment at 425 to 450 (WTKALKFMLTNLKWGLAWVSSQFYNK) is required for membrane-association.

Belongs to the beclin family. In terms of assembly, a homodimeric form is proposed to exist; this metastable form readily transits to ATG14- or UVRAG-containing complexes with BECN1:UVRAG being more stable than BECN1:ATG14. Component of the PI3K (PI3KC3/PI3K-III/class III phosphatidylinositol 3-kinase) complex the core of which is composed of the catalytic subunit PIK3C3, the regulatory subunit PIK3R4 and BECN1 associating with additional regulatory/auxiliary subunits to form alternative complex forms. Alternative complex forms containing a fourth regulatory subunit in a mutually exclusive manner are PI3K complex I (PI3KC3-C1) containing ATG14, and PI3K complex II (PI3KC3-C2) containing UVRAG. PI3KC3-C1 displays a V-shaped architecture with PIK3R4 serving as a bridge between PIK3C3 and the ATG14:BECN1 subcomplex. Both, PI3KC3-C1 and PI3KC3-C2, can associate with further regulatory subunits, such as RUBCN, SH3GLB1/Bif-1 and AMBRA1. PI3KC3-C1 probably associates with PIK3CB. Forms a complex with PPP2CA and AMBRA1; AMBRA1 and BECN1 components of the complex regulate MYC stability via different pathways. Component of the complex, at least composed of LRPPRC, BECN1 and BCL2; the interactions prevent BECN1 from forming an autophagy-inducing complex with PIK3C3. Interacts with AMBRA1, GOPC, GRID2. Interacts with BCL2 and BCL2L1 isoform Bcl-X(L); the interaction inhibits BECN1 function in promoting autophagy by interfering with the formation of the PI3K complex. Interacts with cytosolic HMGB1; inhibits the interaction of BECN1 and BCL2 leading to promotion of autophagy. Interacts with USP10, USP13, VMP1, DAPK1, RAB39A. Interacts with the poly-Gln domain of ATXN3; the interaction causes deubiquitination at Lys-402 and stabilizes BECN1. Interacts with SLAMF1. Interacts with TRIM5; the interaction causes activation of BECN1 by causing its dissociation from its inhibitors BCL2 and TAB2. Interacts with active ULK1 (phosphorylated on 'Ser-317') and MEFV simultaneously. Interacts with WDR81 and WDR91; negatively regulates the PI3 kinase/PI3K activity associated with endosomal membranes. Interacts with LAPTM4B; competes with EGFR for LAPTM4B binding; regulates EGFR activity. Interacts with TRIM50. Interacts with TRIM16. Interacts with ATG14; this interaction is increased in the absence of TMEM39A. Interacts with WASHC1; preventing interaction with AMBRA1 and the DCX(AMBRA1) complex and subsequent ubiquitination. Interacts with TRIM17. Interacts with BCL2L10/BCL-B (via BH1 domain). Interacts with SH3BGRL. Interacts with IRGM; enhancing BECN1-interacting partners and influencing the composition of the BECN1 complex. Interacts with ARMC3. Interacts with LRPPRC. As to quaternary structure, (Microbial infection) Interacts with human cytomegalovirus/HHV-5 protein TRS1. (Microbial infection) Interacts with murine gammaherpesvirus 68 M11. In terms of assembly, (Microbial infection) Interacts with herpes simplex virus 1 (HHV-1) protein ICP34.5; this interaction antagonizes the host autophagy response. As to quaternary structure, (Microbial infection) Interacts with Epstein-Barr virus protein BHRF1; this interaction inhibits BECN1-mediated autophagy induction. In terms of processing, phosphorylation at Thr-119 by DAPK1 reduces its interaction with BCL2 and BCL2L1 and promotes induction of autophagy. In response to autophagic stimuli, phosphorylated at serine residues by AMPK in an ATG14-dependent manner, and this phosphorylation is critical for maximally efficient autophagy. Polyubiquitinated by NEDD4, both with 'Lys-11'- and 'Lys-63'-linkages. 'Lys-11'-linked polyubiquitination leads to degradation and is enhanced when the stabilizing interaction partner VPS34 is depleted. Deubiquitinated by USP10 and USP13, leading to stabilize the PIK3C3/VPS34-containing complexes. Polyubiquitinated at Lys-402 with 'Lys-48'-linkages. 'Lys-48'-linked polyubiquitination of Lys-402 leads to degradation. Deubiquitinated by ATXN3, leading to stabilization. Ubiquitinated at Lys-437 via 'Lys-63'-linkage by the DCX(AMBRA1) complex, thereby increasing the association between BECN1 and PIK3C3 to promote PIK3C3 activity. 'Lys-48'-linked ubiquitination by RNF216 leads to proteasomal degradation and autophagy inhibition. Post-translationally, proteolytically processed by caspases including CASP8 and CASP3; the C-terminal fragments lack autophagy-inducing capacity and are proposed to induce apoptosis. Thus the cleavage is proposed to be an determinant to switch from autophagy to apoptosis pathways affecting cellular homeostasis including viral infections and survival of tumor cells. As to expression, ubiquitous.

The protein localises to the cytoplasm. It is found in the golgi apparatus. It localises to the trans-Golgi network membrane. The protein resides in the endosome membrane. Its subcellular location is the endoplasmic reticulum membrane. The protein localises to the mitochondrion membrane. It is found in the endosome. It localises to the cytoplasmic vesicle. The protein resides in the autophagosome. Its subcellular location is the mitochondrion. The protein localises to the nucleus. In terms of biological role, plays a central role in autophagy. Acts as a core subunit of the PI3K complex that mediates formation of phosphatidylinositol 3-phosphate; different complex forms are believed to play a role in multiple membrane trafficking pathways: PI3KC3-C1 is involved in initiation of autophagosomes and PI3KC3-C2 in maturation of autophagosomes and endocytosis. Involved in regulation of degradative endocytic trafficking and required for the abscission step in cytokinesis, probably in the context of PI3KC3-C2. Essential for the formation of PI3KC3-C2 but not PI3KC3-C1 PI3K complex forms. Involved in endocytosis. May play a role in antiviral host defense. Functionally, beclin-1-C 35 kDa localized to mitochondria can promote apoptosis; it induces the mitochondrial translocation of BAX and the release of proapoptotic factors. (Microbial infection) Protects against infection by a neurovirulent strain of Sindbis virus. The polypeptide is Beclin-1 (BECN1) (Homo sapiens (Human)).